A 406-amino-acid polypeptide reads, in one-letter code: Solute carrier family 22 member 18 (406 aa).

10 helical membrane-spanning segments follow: residues Gly8–Phe28, Val43–Phe63, Ala85–Phe105, Leu140–Thr160, Ala168–Ala188, Phe226–Ile246, Ala258–Gly278, Leu295–Phe315, Leu316–Thr336, and Gly374–Trp394.

This sequence belongs to the major facilitator (TC 2.A.1) superfamily. Organic cation transporter (TC 2.A.1.19) family. Interacts with RNF167. In terms of tissue distribution, expressed at high levels in fetal and adult kidney and liver, and extraembryonic membranes (yolk sac). Expressed at moderate levels in intestine, heart, lung and testis.

It is found in the apical cell membrane. Its function is as follows. May act as a transporter of organic cations based on a proton efflux antiport mechanism. May play a role in the transport of chloroquine and quinidine-related compounds in kidney. Plays a role in the regulation of lipid metabolism. This is Solute carrier family 22 member 18 (Slc67a1) from Mus musculus (Mouse).